A 328-amino-acid polypeptide reads, in one-letter code: Ketol-acid reductoisomerase (NADP(+)) (328 aa).

In terms of domain architecture, KARI N-terminal Rossmann spans 1–179 (MRVLYERDGD…GGGAAGIIET (179 aa)). NADP(+)-binding positions include 24-27 (YGSQ), R47, and S51. Residue H106 is part of the active site. Residue G132 participates in NADP(+) binding. A KARI C-terminal knotted domain is found at 180 to 325 (TFVDETETDL…ARLRSRMTCA (146 aa)). Mg(2+) contacts are provided by D188, E192, E224, and E228. A substrate-binding site is contributed by S249.

This sequence belongs to the ketol-acid reductoisomerase family. Mg(2+) serves as cofactor.

It catalyses the reaction (2R)-2,3-dihydroxy-3-methylbutanoate + NADP(+) = (2S)-2-acetolactate + NADPH + H(+). It carries out the reaction (2R,3R)-2,3-dihydroxy-3-methylpentanoate + NADP(+) = (S)-2-ethyl-2-hydroxy-3-oxobutanoate + NADPH + H(+). Its pathway is amino-acid biosynthesis; L-isoleucine biosynthesis; L-isoleucine from 2-oxobutanoate: step 2/4. The protein operates within amino-acid biosynthesis; L-valine biosynthesis; L-valine from pyruvate: step 2/4. Functionally, involved in the biosynthesis of branched-chain amino acids (BCAA). Catalyzes an alkyl-migration followed by a ketol-acid reduction of (S)-2-acetolactate (S2AL) to yield (R)-2,3-dihydroxy-isovalerate. In the isomerase reaction, S2AL is rearranged via a Mg-dependent methyl migration to produce 3-hydroxy-3-methyl-2-ketobutyrate (HMKB). In the reductase reaction, this 2-ketoacid undergoes a metal-dependent reduction by NADPH to yield (R)-2,3-dihydroxy-isovalerate. This Tremblaya princeps protein is Ketol-acid reductoisomerase (NADP(+)).